The chain runs to 87 residues: MSFLDTLFGKRERSSDIARDRLLTVLVHDRVKLTPDMMEQLKADLSAVIARYVPSVDAGAIEVTLLRGESVDHLKADIPLRRTTQKY.

This sequence belongs to the MinE family.

Its function is as follows. Prevents the cell division inhibition by proteins MinC and MinD at internal division sites while permitting inhibition at polar sites. This ensures cell division at the proper site by restricting the formation of a division septum at the midpoint of the long axis of the cell. This is Cell division topological specificity factor from Roseiflexus sp. (strain RS-1).